We begin with the raw amino-acid sequence, 391 residues long: Ferrochelatase (391 aa).

The Fe cation site is built by His-196 and Glu-281.

It belongs to the ferrochelatase family.

Its subcellular location is the cytoplasm. It catalyses the reaction heme b + 2 H(+) = protoporphyrin IX + Fe(2+). It functions in the pathway porphyrin-containing compound metabolism; protoheme biosynthesis; protoheme from protoporphyrin-IX: step 1/1. In terms of biological role, catalyzes the ferrous insertion into protoporphyrin IX. This Synechococcus sp. (strain CC9311) protein is Ferrochelatase.